Reading from the N-terminus, the 300-residue chain is Protein SPEAR4 (300 aa).

Positions 1 to 10 are enriched in polar residues; the sequence is MCSKTSSVSY. Residues 1–45 form a disordered region; the sequence is MCSKTSSVSYGNREDDDNYSSLCPKKQKHNNGGKKRVPRRGPGVA. Residues 25 to 39 are compositionally biased toward basic residues; that stretch reads KKQKHNNGGKKRVPR. Residues 40 to 48 carry the SPL motif; it reads RGPGVAELE. An EAR motif is present at residues 294 to 300; it reads IDLRLKL.

Interacts with SPL and SPEAR2. In terms of tissue distribution, expressed in leaves.

Adapter-like transcriptional repressor recruiting TPL/TPR coepressors to inhibit TCP transcription factors. May be involved in leaf development. This is Protein SPEAR4 from Arabidopsis thaliana (Mouse-ear cress).